The chain runs to 850 residues: Probable beta-glucosidase J (850 aa).

N-linked (GlcNAc...) asparagine glycosylation is found at Asn-43 and Asn-52. The active site involves Asp-254. One can recognise a PA14 domain in the interval Thr-423–Val-583. Residue Asn-508 is glycosylated (N-linked (GlcNAc...) asparagine).

The protein belongs to the glycosyl hydrolase 3 family.

The protein resides in the secreted. The enzyme catalyses Hydrolysis of terminal, non-reducing beta-D-glucosyl residues with release of beta-D-glucose.. Its pathway is glycan metabolism; cellulose degradation. In terms of biological role, beta-glucosidases are one of a number of cellulolytic enzymes involved in the degradation of cellulosic biomass. Catalyzes the last step releasing glucose from the inhibitory cellobiose. The protein is Probable beta-glucosidase J (bglJ) of Emericella nidulans (strain FGSC A4 / ATCC 38163 / CBS 112.46 / NRRL 194 / M139) (Aspergillus nidulans).